The primary structure comprises 503 residues: GMP synthase [glutamine-hydrolyzing] (503 aa).

Residues 1–189 (MVLVLDFGSQ…FLELAGAKRD (189 aa)) form the Glutamine amidotransferase type-1 domain. Catalysis depends on cysteine 78, which acts as the Nucleophile. Catalysis depends on residues histidine 164 and glutamate 166. The GMPS ATP-PPase domain maps to 190–378 (WTPEHVLEEL…LGLPDTLRLR (189 aa)). 217–223 (SGGVDSS) contributes to the ATP binding site.

As to quaternary structure, homodimer.

The enzyme catalyses XMP + L-glutamine + ATP + H2O = GMP + L-glutamate + AMP + diphosphate + 2 H(+). It participates in purine metabolism; GMP biosynthesis; GMP from XMP (L-Gln route): step 1/1. Its function is as follows. Catalyzes the synthesis of GMP from XMP. The sequence is that of GMP synthase [glutamine-hydrolyzing] from Thermus thermophilus (strain ATCC BAA-163 / DSM 7039 / HB27).